Here is a 356-residue protein sequence, read N- to C-terminus: Ciliogenesis-associated TTC17-interacting protein (356 aa).

Belongs to the CATIP family. As to expression, expressed in tissues rich in motile cilia.

Its subcellular location is the nucleus. The protein localises to the cytoplasm. The protein resides in the cell membrane. It is found in the cytoskeleton. Its function is as follows. Plays a role in primary ciliogenesis by modulating actin polymerization. In Danio rerio (Zebrafish), this protein is Ciliogenesis-associated TTC17-interacting protein (catip).